We begin with the raw amino-acid sequence, 65 residues long: Alpha-toxin OD1 (65 aa).

The LCN-type CS-alpha/beta domain maps to R3–R65. The Important for toxin selectivity for individual Nav channel subtype (Nav1.6/SCN8A and Nav1.7/SCN9A), but not for toxin potency motif lies at D9–K11. 4 disulfide bridges follow: C13–C64, C17–C37, C23–C47, and C27–C49. At R65 the chain carries Arginine amide.

This sequence belongs to the long (4 C-C) scorpion toxin superfamily. Sodium channel inhibitor family. Alpha subfamily. Expressed by the venom gland.

Its subcellular location is the secreted. In terms of biological role, alpha toxins bind voltage-independently at site-3 of sodium channels and inhibit the inactivation of the activated channels. The toxin affect mammalian sodium channels Nav1.7/SCN9A (EC(50)=4.5 nM), Nav1.4/SCN4A (EC(50)=9.6 nM), Nav1.6/SCN8A (EC(50)=30 nM), Nav1.5/SCN5A (only at micromolar concentrations), and insect sodium channel para/tipE (EC(50)=80 nM). In vivo, intraplantar administration of this toxin elicits pain behaviors, including licking and flinching of the hind paw. The polypeptide is Alpha-toxin OD1 (Odontobuthus doriae (Yellow Iranian scorpion)).